The primary structure comprises 151 residues: Protein SprT-like (151 aa).

The region spanning 7–146 (QSLTESIAIK…CGRCGGILKL (140 aa)) is the SprT-like domain. Position 67 (His67) interacts with Zn(2+). Glu68 is a catalytic residue. Residue His71 participates in Zn(2+) binding.

It belongs to the SprT family. Zn(2+) serves as cofactor.

The protein resides in the cytoplasm. The chain is Protein SprT-like from Staphylococcus epidermidis (strain ATCC 35984 / DSM 28319 / BCRC 17069 / CCUG 31568 / BM 3577 / RP62A).